The primary structure comprises 226 residues: PKHD-type hydroxylase MADE_1018490 (226 aa).

The 101-residue stretch at 77 to 177 (RIFPPCFNRY…RIAAITWIQS (101 aa)) folds into the Fe2OG dioxygenase domain. Positions 95, 97, and 158 each coordinate Fe cation. R168 lines the 2-oxoglutarate pocket.

The cofactor is Fe(2+). Requires L-ascorbate as cofactor.

The protein is PKHD-type hydroxylase MADE_1018490 of Alteromonas mediterranea (strain DSM 17117 / CIP 110805 / LMG 28347 / Deep ecotype).